Here is a 345-residue protein sequence, read N- to C-terminus: High mobility group protein 20A (345 aa).

Disordered regions lie at residues 1 to 130 (MEST…PFPE) and 166 to 206 (QKYQ…EKES). Composition is skewed to polar residues over residues 22–38 (NNQPPFCGTTVSGSSQA) and 57–67 (LHQSGEQQLGN). Positions 80–94 (ARRGGWNKGRKRKRS) are enriched in basic residues. The HMG box DNA-binding region spans 101–169 (PKAPLTGYVR…RYTKELQKYQ (69 aa)). The span at 112 to 125 (MNERREQLRTERPD) shows a compositional bias: basic and acidic residues. A compositionally biased stretch (polar residues) spans 167–178 (KYQNTDAYQTYS). Basic residues predominate over residues 179–189 (RKAKSRQKGRQ). Residues 227–285 (SKAREAELRQLRKSNMEFEERNAALQKHVESMRSAVQRLEAELSQEHERNSLLQQHLQS) are a coiled coil.

The protein localises to the nucleus. In terms of biological role, plays a role in neuronal differentiation. This Xenopus laevis (African clawed frog) protein is High mobility group protein 20A (hmg20a).